Reading from the N-terminus, the 1309-residue chain is Mediator of RNA polymerase II transcription subunit 33A (1309 aa).

Positions 809–829 (QTLNPVNSGTSSSSGAASEDS) are disordered. The segment covering 816 to 826 (SGTSSSSGAAS) has biased composition (low complexity).

It belongs to the Mediator complex subunit 33 family. Component of the Mediator complex.

It is found in the nucleus. Its function is as follows. Component of the Mediator complex, a coactivator involved in the regulated transcription of nearly all RNA polymerase II-dependent genes. Mediator functions as a bridge to convey information from gene-specific regulatory proteins to the basal RNA polymerase II transcription machinery. The Mediator complex, having a compact conformation in its free form, is recruited to promoters by direct interactions with regulatory proteins and serves for the assembly of a functional preinitiation complex with RNA polymerase II and the general transcription factors. Involved in the repression of phenylpropanoid biosynthesis. May compete with MED33B for common binding partners or for occupancy in Mediator. The sequence is that of Mediator of RNA polymerase II transcription subunit 33A (MED33A) from Arabidopsis thaliana (Mouse-ear cress).